A 293-amino-acid polypeptide reads, in one-letter code: Aspartate carbamoyltransferase catalytic subunit (293 aa).

R50 and T51 together coordinate carbamoyl phosphate. Position 78 (K78) interacts with L-aspartate. 3 residues coordinate carbamoyl phosphate: R100, H127, and Q130. R160 and R210 together coordinate L-aspartate. Residues A253 and P254 each coordinate carbamoyl phosphate.

This sequence belongs to the aspartate/ornithine carbamoyltransferase superfamily. ATCase family. In terms of assembly, heterododecamer (2C3:3R2) of six catalytic PyrB chains organized as two trimers (C3), and six regulatory PyrI chains organized as three dimers (R2).

The catalysed reaction is carbamoyl phosphate + L-aspartate = N-carbamoyl-L-aspartate + phosphate + H(+). Its pathway is pyrimidine metabolism; UMP biosynthesis via de novo pathway; (S)-dihydroorotate from bicarbonate: step 2/3. Catalyzes the condensation of carbamoyl phosphate and aspartate to form carbamoyl aspartate and inorganic phosphate, the committed step in the de novo pyrimidine nucleotide biosynthesis pathway. In Staphylococcus aureus (strain USA300), this protein is Aspartate carbamoyltransferase catalytic subunit.